A 182-amino-acid chain; its full sequence is Ribosome maturation factor RimM (182 aa).

The 80-residue stretch at 103–182 folds into the PRC barrel domain; the sequence is GDDYYWKDLM…VIEADWDPGF (80 aa).

This sequence belongs to the RimM family. Binds ribosomal protein uS19.

The protein localises to the cytoplasm. Its function is as follows. An accessory protein needed during the final step in the assembly of 30S ribosomal subunit, possibly for assembly of the head region. Essential for efficient processing of 16S rRNA. May be needed both before and after RbfA during the maturation of 16S rRNA. It has affinity for free ribosomal 30S subunits but not for 70S ribosomes. The chain is Ribosome maturation factor RimM from Serratia proteamaculans (strain 568).